The sequence spans 152 residues: Transcriptional regulator MraZ (152 aa).

2 consecutive SpoVT-AbrB domains span residues 5–52 (ATQI…TLSE) and 81–124 (ASEC…DEQA).

This sequence belongs to the MraZ family. In terms of assembly, forms oligomers.

It localises to the cytoplasm. The protein localises to the nucleoid. Its function is as follows. Negatively regulates its own expression and that of the subsequent genes in the proximal part of the division and cell wall (dcw) gene cluster. Acts by binding directly to DNA. May also regulate the expression of genes outside the dcw cluster. This is Transcriptional regulator MraZ from Photorhabdus laumondii subsp. laumondii (strain DSM 15139 / CIP 105565 / TT01) (Photorhabdus luminescens subsp. laumondii).